A 190-amino-acid chain; its full sequence is Orotate phosphoribosyltransferase (190 aa).

Residues Arg-101, Lys-102, Lys-105, His-107, and 128–136 contribute to the 5-phospho-alpha-D-ribose 1-diphosphate site; that span reads EDVVTTGGS. Orotate-binding residues include Thr-132 and Arg-160.

Belongs to the purine/pyrimidine phosphoribosyltransferase family. PyrE subfamily. In terms of assembly, homodimer. The cofactor is Mg(2+).

The catalysed reaction is orotidine 5'-phosphate + diphosphate = orotate + 5-phospho-alpha-D-ribose 1-diphosphate. Its pathway is pyrimidine metabolism; UMP biosynthesis via de novo pathway; UMP from orotate: step 1/2. Catalyzes the transfer of a ribosyl phosphate group from 5-phosphoribose 1-diphosphate to orotate, leading to the formation of orotidine monophosphate (OMP). This chain is Orotate phosphoribosyltransferase, found in Synechococcus sp. (strain CC9605).